The following is a 732-amino-acid chain: Eukaryotic translation initiation factor 3 subunit B (732 aa).

Positions 1 to 94 are sufficient for interaction with HCR1 and TIF32; that stretch reads MTTLESLKIE…LFIEMESVSA (94 aa). The interval 1 to 219 is sufficient for interaction with PIC8; that stretch reads MTTLESLKIE…GVTSWGGPNF (219 aa). One can recognise an RRM domain in the interval 37 to 120; that stretch reads NFLVVDGAPV…HRLLVNSLND (84 aa). WD repeat units follow at residues 185–224, 237–280, 439–481, and 507–554; these read ARKN…RLKR, PTEK…LMKT, EMKD…KFFA, and VDQQ…KTLN.

Belongs to the eIF-3 subunit B family. As to quaternary structure, component of the eukaryotic translation initiation factor 3 (eIF-3) complex.

The protein localises to the cytoplasm. Functionally, RNA-binding component of the eukaryotic translation initiation factor 3 (eIF-3) complex, which is involved in protein synthesis of a specialized repertoire of mRNAs and, together with other initiation factors, stimulates binding of mRNA and methionyl-tRNAi to the 40S ribosome. The eIF-3 complex specifically targets and initiates translation of a subset of mRNAs involved in cell proliferation. The chain is Eukaryotic translation initiation factor 3 subunit B from Kluyveromyces lactis (strain ATCC 8585 / CBS 2359 / DSM 70799 / NBRC 1267 / NRRL Y-1140 / WM37) (Yeast).